We begin with the raw amino-acid sequence, 363 residues long: Chorismate synthase (363 aa).

Residues Arg48 and Arg54 each coordinate NADP(+). Residues 125–127, 237–238, Gly277, 292–296, and Arg318 contribute to the FMN site; these read RSS, NA, and KPTSS.

Belongs to the chorismate synthase family. In terms of assembly, homotetramer. FMNH2 is required as a cofactor.

The enzyme catalyses 5-O-(1-carboxyvinyl)-3-phosphoshikimate = chorismate + phosphate. It participates in metabolic intermediate biosynthesis; chorismate biosynthesis; chorismate from D-erythrose 4-phosphate and phosphoenolpyruvate: step 7/7. Catalyzes the anti-1,4-elimination of the C-3 phosphate and the C-6 proR hydrogen from 5-enolpyruvylshikimate-3-phosphate (EPSP) to yield chorismate, which is the branch point compound that serves as the starting substrate for the three terminal pathways of aromatic amino acid biosynthesis. This reaction introduces a second double bond into the aromatic ring system. In Pseudomonas paraeruginosa (strain DSM 24068 / PA7) (Pseudomonas aeruginosa (strain PA7)), this protein is Chorismate synthase.